We begin with the raw amino-acid sequence, 274 residues long: 3-methyl-2-oxobutanoate hydroxymethyltransferase (274 aa).

Asp-49 and Asp-88 together coordinate Mg(2+). 3-methyl-2-oxobutanoate-binding positions include 49–50, Asp-88, and Lys-118; that span reads DS. Glu-120 lines the Mg(2+) pocket. Glu-187 (proton acceptor) is an active-site residue.

It belongs to the PanB family. As to quaternary structure, homodecamer; pentamer of dimers. The cofactor is Mg(2+).

It is found in the cytoplasm. The catalysed reaction is 3-methyl-2-oxobutanoate + (6R)-5,10-methylene-5,6,7,8-tetrahydrofolate + H2O = 2-dehydropantoate + (6S)-5,6,7,8-tetrahydrofolate. It functions in the pathway cofactor biosynthesis; (R)-pantothenate biosynthesis; (R)-pantoate from 3-methyl-2-oxobutanoate: step 1/2. In terms of biological role, catalyzes the reversible reaction in which hydroxymethyl group from 5,10-methylenetetrahydrofolate is transferred onto alpha-ketoisovalerate to form ketopantoate. The polypeptide is 3-methyl-2-oxobutanoate hydroxymethyltransferase (Paramagnetospirillum magneticum (strain ATCC 700264 / AMB-1) (Magnetospirillum magneticum)).